A 150-amino-acid chain; its full sequence is MALSYKEKLIECIDNELQNGGTLLLLTNNNVVSEISYYGNGYKYFTFNTNHDLISQEELKGATSNNIARMIYNWIMKNPQNNKIWNGEPQTRIYFENNVYHTNYNHECIKDFWEVSTKVGPCIFNDRSIWCTKCTTFYPFSNILSPNMLE.

Belongs to the asfivirus A151R family. In terms of assembly, monomer. Homodimer. Interacts with protein B119L. Interacts with membrane protein E248R. Requires Zn(2+) as cofactor.

In terms of biological role, may participate in a redox cascade for the formation of disulfide bonds in viral proteins. The sequence is that of Protein A151R from African swine fever virus (isolate Tick/Malawi/Lil 20-1/1983) (ASFV).